The following is a 433-amino-acid chain: PC-esterase domain-containing protein 1B (433 aa).

A disordered region spans residues 386–433 (PPCHQRQAPVVHRGFPRHFARGPYSNPWRDRPRRPPKHSPAGLESRPQ).

It belongs to the PC-esterase family.

This is PC-esterase domain-containing protein 1B (Pced1b) from Mus musculus (Mouse).